Here is a 404-residue protein sequence, read N- to C-terminus: Propionate kinase (404 aa).

This sequence belongs to the acetokinase family. PduW subfamily.

Its subcellular location is the cytoplasm. The catalysed reaction is propanoate + ATP = propanoyl phosphate + ADP. The protein operates within polyol metabolism; 1,2-propanediol degradation. Functionally, works with phosphate acetyltransferase (pta) to capture exogenous propionate and regenerate propionyl-CoA during degradation of 1,2-propanediol (1,2-PD). This Escherichia fergusonii (strain ATCC 35469 / DSM 13698 / CCUG 18766 / IAM 14443 / JCM 21226 / LMG 7866 / NBRC 102419 / NCTC 12128 / CDC 0568-73) protein is Propionate kinase.